The chain runs to 244 residues: RAD51-like protein 1 (244 aa).

In terms of assembly, interacts with brc-2 and rad-51.

The protein localises to the nucleus. Functionally, has a role in the homologous recombination repair (HRR) of genomic DNA during meiosis. Required for rad-51 recruitment onto ssDNA gaps generated at stalled replication fork barriers. The sequence is that of RAD51-like protein 1 from Caenorhabditis briggsae.